Reading from the N-terminus, the 266-residue chain is Putative carbamate hydrolase RutD (266 aa).

The protein belongs to the AB hydrolase superfamily. Hydrolase RutD family.

It carries out the reaction carbamate + 2 H(+) = NH4(+) + CO2. Its function is as follows. Involved in pyrimidine catabolism. May facilitate the hydrolysis of carbamate, a reaction that can also occur spontaneously. This is Putative carbamate hydrolase RutD from Escherichia coli O45:K1 (strain S88 / ExPEC).